The primary structure comprises 346 residues: Blue-light-activated histidine kinase 2 (346 aa).

The 75-residue stretch at 8–82 (HDKEAWGRLP…KAIRNCEEVE (75 aa)) folds into the PAS domain. Cys-55 is subject to S-4a-FMN cysteine. The PAC domain occupies 79 to 133 (EEVEETIYNYRADGEGFWNHLLMGPLEDQDEKCRYFVGIQVDMGQSESPDRATEL). A Histidine kinase domain is found at 139–334 (EVQHRVKNHL…IVNIDIPLSQ (196 aa)). A Phosphohistidine; by autocatalysis modification is found at His-142.

In terms of processing, FMN binds covalently to cysteine after exposure to blue light and this bond is spontaneously broken in the dark.

It carries out the reaction ATP + protein L-histidine = ADP + protein N-phospho-L-histidine.. Photosensitive kinase that is involved in increased bacterial virulence upon exposure to light. The chain is Blue-light-activated histidine kinase 2 from Erythrobacter litoralis (strain HTCC2594).